The chain runs to 349 residues: Selenide, water dikinase (349 aa).

The active site involves U19. A non-standard amino acid (selenocysteine) is located at residue U19. Residues K22 and 50-52 (LGD) each bind ATP. D53 contacts Mg(2+). Residues D69, D92, and 140 to 142 (GHT) each bind ATP. D92 provides a ligand contact to Mg(2+). Position 246 (D246) interacts with Mg(2+).

The protein belongs to the selenophosphate synthase 1 family. Class I subfamily. In terms of assembly, homodimer. The cofactor is Mg(2+).

The enzyme catalyses hydrogenselenide + ATP + H2O = selenophosphate + AMP + phosphate + 2 H(+). Functionally, synthesizes selenophosphate from selenide and ATP. In Methanocaldococcus jannaschii (strain ATCC 43067 / DSM 2661 / JAL-1 / JCM 10045 / NBRC 100440) (Methanococcus jannaschii), this protein is Selenide, water dikinase.